The sequence spans 294 residues: Non-selective voltage-gated ion channel VDAC2 (294 aa).

Position 2 is an N-acetylalanine (A2). 2 residues coordinate ATP: K23 and K31. K31 bears the N6-acetyllysine; alternate mark. An N6-succinyllysine; alternate modification is found at K31. A Glycyl lysine isopeptide (Lys-Gly) (interchain with G-Cter in ubiquitin); alternate cross-link involves residue K31. The next 2 beta stranded transmembrane spans lie at 37–46 and 50–58; these read LVKLDVKTKS and VEFSTSGSS. Glycyl lysine isopeptide (Lys-Gly) (interchain with G-Cter in ubiquitin) cross-links involve residues K64 and K72. A beta stranded transmembrane segment spans residues 65–75; sequence VTGTLETKYKW. Y78 is subject to Phosphotyrosine. Beta stranded transmembrane passes span 80 to 87, 91 to 100, and 106 to 115; these read LTFTEKWN, TLGTEIAIED, and LKLTFDTTFS. Phosphothreonine is present on T118. K120 is subject to N6-acetyllysine; alternate. K120 participates in a covalent cross-link: Glycyl lysine isopeptide (Lys-Gly) (interchain with G-Cter in ubiquitin); alternate. Residues K121 and K124 each participate in a glycyl lysine isopeptide (Lys-Gly) (interchain with G-Cter in ubiquitin) cross-link. 4 beta stranded membrane passes run 122 to 131, 134 to 141, 148 to 156, and 161 to 169; these read SGKIKSSYKR, INLGCDVD, AIHGSAVFG, and LAGYQMTFD. A Glycyl lysine isopeptide (Lys-Gly) (interchain with G-Cter in ubiquitin) cross-link involves residue K172. 6 consecutive transmembrane segments (beta stranded) span residues 174-186, 189-196, 200-209, 213-222, 229-238, and 242-249; these read KLTR…GYRT, FQLHTNVN, EFGGSIYQKV, LDTSVNLAWT, RFGIAAKYQL, and ASISAKVN. S251 carries the phosphoserine modification. NAD(+)-binding positions include 253–255 and 271–275; these read LIG and SALVD. Transmembrane regions (beta stranded) follow at residues 253–262 and 265–274; these read LIGVGYTQTL and GVKLTLSALV. An N6-acetyllysine; alternate modification is found at K277. Residue K277 forms a Glycyl lysine isopeptide (Lys-Gly) (interchain with G-Cter in ubiquitin); alternate linkage. Residues 284–293 form a beta stranded membrane-spanning segment; the sequence is HKVGLALELE. A Glycyl lysine isopeptide (Lys-Gly) (interchain with G-Cter in ubiquitin) cross-link involves residue K285.

Belongs to the eukaryotic mitochondrial porin family. Monomer, homodimer and higher order oligomers; formation of higher order structures is necessary for scramblase activity. Interacts with ARMC12 in a TBC1D21-dependent manner. Interacts with KLC3. Interacts with SPATA33. Interacts with PPP3CC in a SPATA33-dependent manner. In terms of processing, ubiquitinated by PRKN during mitophagy, leading to its degradation and enhancement of mitophagy. Deubiquitinated by USP30. Expressed in erythrocytes (at protein level). Expressed in all tissues examined.

It is found in the mitochondrion outer membrane. It localises to the membrane. The enzyme catalyses chloride(in) = chloride(out). The catalysed reaction is K(+)(in) = K(+)(out). It carries out the reaction a 1,2-diacyl-sn-glycero-3-phospho-L-serine(in) = a 1,2-diacyl-sn-glycero-3-phospho-L-serine(out). It catalyses the reaction a 1,2-diacyl-sn-glycero-3-phosphocholine(in) = a 1,2-diacyl-sn-glycero-3-phosphocholine(out). The enzyme catalyses a 1,2-diacyl-sn-glycero-3-phospho-(1D-myo-inositol)(in) = a 1,2-diacyl-sn-glycero-3-phospho-(1D-myo-inositol)(out). In terms of biological role, non-selective voltage-gated ion channel that mediates the transport of anions and cations through the mitochondrion outer membrane and plasma membrane. The channel adopts an open conformation at zero mV and a closed conformation at both positive and negative potentials. There are two populations of channels; the main that functions in a lower open-state conductance with lower ion selectivity, that switch, in a voltage-dependent manner, from the open to a low-conducting 'closed' state and the other that has a normal ion selectivity in the typical high conductance, 'open' state. Binds various lipids, including the sphingolipid ceramide, the phospholipid phosphatidylcholine, and the sterols cholesterol and oxysterol. Binding of ceramide promotes the mitochondrial outer membrane permeabilization (MOMP) apoptotic pathway. Its function is as follows. Catalyzes the scrambling of phospholipids across the outer mitochondrial membrane; the mechanism is unrelated to channel activity and is capable of translocating both anionic and zwitterionic phospholipids. The polypeptide is Non-selective voltage-gated ion channel VDAC2 (Homo sapiens (Human)).